Here is a 141-residue protein sequence, read N- to C-terminus: Cystatin (141 aa).

Positions 1-26 (MVRSQLPVAAPLRLLCALLLLPSATM) are cleaved as a signal peptide. Positions 29–129 (GGLSPRSVTD…CHFQVWSRPW (101 aa)) constitute a Cystatin domain. Residues 73–77 (QVVSG) carry the Secondary area of contact motif. 2 cysteine pairs are disulfide-bonded: Cys-91–Cys-107 and Cys-120–Cys-140.

Belongs to the cystatin family. Expressed at a low level by the venom gland (at protein level).

Its subcellular location is the secreted. Its function is as follows. Inhibits various C1 cysteine proteases including cathepsin L, papain and cathepsin B. This protein has no toxic activity and its function in the venom is unknown. It may play a role as a housekeeping or regulatory protein. The chain is Cystatin from Micropechis ikaheca (New Guinean small-eyed snake).